Reading from the N-terminus, the 509-residue chain is ATP synthase subunit alpha, mitochondrial (509 aa).

171–178 (GDRQTGKT) contacts ATP.

Belongs to the ATPase alpha/beta chains family. As to quaternary structure, F-type ATPases have 2 components, CF(1) - the catalytic core - and CF(0) - the membrane proton channel. CF(1) has five subunits: alpha(3), beta(3), gamma(1), delta(1), epsilon(1). CF(0) has three main subunits: a, b and c.

Its subcellular location is the mitochondrion. It is found in the mitochondrion inner membrane. In terms of biological role, mitochondrial membrane ATP synthase (F(1)F(0) ATP synthase or Complex V) produces ATP from ADP in the presence of a proton gradient across the membrane which is generated by electron transport complexes of the respiratory chain. F-type ATPases consist of two structural domains, F(1) - containing the extramembraneous catalytic core, and F(0) - containing the membrane proton channel, linked together by a central stalk and a peripheral stalk. During catalysis, ATP synthesis in the catalytic domain of F(1) is coupled via a rotary mechanism of the central stalk subunits to proton translocation. Subunits alpha and beta form the catalytic core in F(1). Rotation of the central stalk against the surrounding alpha(3)beta(3) subunits leads to hydrolysis of ATP in three separate catalytic sites on the beta subunits. Subunit alpha does not bear the catalytic high-affinity ATP-binding sites. This is ATP synthase subunit alpha, mitochondrial (ATPA) from Nicotiana plumbaginifolia (Leadwort-leaved tobacco).